Here is a 353-residue protein sequence, read N- to C-terminus: Photosystem II protein D1 (353 aa).

Position 2 is an N-acetylthreonine (Thr-2). Thr-2 carries the post-translational modification Phosphothreonine. 3 helical membrane-spanning segments follow: residues Tyr-29–Ser-46, His-118–Leu-133, and Trp-142–Ala-156. His-118 serves as a coordination point for chlorophyll a. Tyr-126 is a binding site for pheophytin a. Positions 170 and 189 each coordinate [CaMn4O5] cluster. A helical transmembrane segment spans residues Phe-197–Leu-218. His-198 serves as a coordination point for chlorophyll a. A quinone is bound by residues His-215 and Ser-264 to Phe-265. His-215 is a binding site for Fe cation. Residue His-272 participates in Fe cation binding. The helical transmembrane segment at Phe-274 to Leu-288 threads the bilayer. [CaMn4O5] cluster-binding residues include His-332, Glu-333, Asp-342, and Ala-344. A propeptide spanning residues Ser-345–Gly-353 is cleaved from the precursor.

The protein belongs to the reaction center PufL/M/PsbA/D family. PSII is composed of 1 copy each of membrane proteins PsbA, PsbB, PsbC, PsbD, PsbE, PsbF, PsbH, PsbI, PsbJ, PsbK, PsbL, PsbM, PsbT, PsbX, PsbY, PsbZ, Psb30/Ycf12, at least 3 peripheral proteins of the oxygen-evolving complex and a large number of cofactors. It forms dimeric complexes. The D1/D2 heterodimer binds P680, chlorophylls that are the primary electron donor of PSII, and subsequent electron acceptors. It shares a non-heme iron and each subunit binds pheophytin, quinone, additional chlorophylls, carotenoids and lipids. D1 provides most of the ligands for the Mn4-Ca-O5 cluster of the oxygen-evolving complex (OEC). There is also a Cl(-1) ion associated with D1 and D2, which is required for oxygen evolution. The PSII complex binds additional chlorophylls, carotenoids and specific lipids. is required as a cofactor. Tyr-161 forms a radical intermediate that is referred to as redox-active TyrZ, YZ or Y-Z. Post-translationally, C-terminally processed by CTPA; processing is essential to allow assembly of the oxygen-evolving complex and thus photosynthetic growth.

Its subcellular location is the plastid. It is found in the chloroplast thylakoid membrane. It catalyses the reaction 2 a plastoquinone + 4 hnu + 2 H2O = 2 a plastoquinol + O2. In terms of biological role, photosystem II (PSII) is a light-driven water:plastoquinone oxidoreductase that uses light energy to abstract electrons from H(2)O, generating O(2) and a proton gradient subsequently used for ATP formation. It consists of a core antenna complex that captures photons, and an electron transfer chain that converts photonic excitation into a charge separation. The D1/D2 (PsbA/PsbD) reaction center heterodimer binds P680, the primary electron donor of PSII as well as several subsequent electron acceptors. This chain is Photosystem II protein D1, found in Adiantum capillus-veneris (Maidenhair fern).